The sequence spans 735 residues: Ion-translocating oxidoreductase complex subunit C (735 aa).

4Fe-4S ferredoxin-type domains are found at residues 368–397 and 407–436; these read MGAP…QQLY and KATA…VQYF. Positions 377, 380, 383, 387, 416, 419, 422, and 426 each coordinate [4Fe-4S] cluster. The disordered stretch occupies residues 562-713; the sequence is AIARAKARKQ…AEPADPRKAA (152 aa).

This sequence belongs to the 4Fe4S bacterial-type ferredoxin family. RnfC subfamily. The complex is composed of six subunits: RsxA, RsxB, RsxC, RsxD, RsxE and RsxG. Requires [4Fe-4S] cluster as cofactor.

The protein resides in the cell inner membrane. Part of a membrane-bound complex that couples electron transfer with translocation of ions across the membrane. Required to maintain the reduced state of SoxR. This is Ion-translocating oxidoreductase complex subunit C from Salmonella newport (strain SL254).